Here is a 3375-residue protein sequence, read N- to C-terminus: Basement membrane proteoglycan (3375 aa).

Positions M1 to A22 are cleaved as a signal peptide. An Ig-like C2-type 1 domain is found at V45–S130. 11 disulfide bridges follow: C66–C114, C149–C161, C156–C174, C168–C183, C190–C202, C197–C215, C209–C224, C233–C246, C240–C259, C253–C268, and C293–C344. 3 consecutive LDL-receptor class A domains span residues Q148–P184, T189–N225, and D232–V269. The region spanning P271 to A355 is the Ig-like C2-type 2 domain. A disordered region spans residues V364–D385. A compositionally biased stretch (pro residues) spans P369 to P378. 3 disulfides stabilise this stretch: C384-C400, C402-C411, and C414-C429. The region spanning C384–K431 is the Laminin EGF-like 1; truncated domain. Positions C432–C441 constitute a Laminin EGF-like 2; first part domain. The Laminin IV type A 1 domain occupies K450 to Q633. 4 cysteine pairs are disulfide-bonded: C634/C648, C636/C689, C691/C700, and C703/C718. Residues C634–P666 form the Laminin EGF-like 2; second part domain. The Laminin EGF-like 3; truncated domain maps to C674–P720. One can recognise a Laminin EGF-like 4; first part domain in the interval C721–C730. The Laminin IV type A 2 domain occupies V740–Q921. The 33-residue stretch at C922–K954 folds into the Laminin EGF-like 4; second part domain. 15 disulfide bridges follow: C955–C964, C957–C971, C974–C983, C986–C1002, C1011–C1021, C1013–C1027, C1030–C1039, C1042–C1058, C1061–C1069, C1063–C1079, C1082–C1091, C1094–C1109, C1152–C1200, C1247–C1294, and C1338–C1384. Laminin EGF-like domains follow at residues C955 to P1004, C1011 to P1060, and C1061 to P1111. Ig-like C2-type domains are found at residues P1126–S1222, P1226–E1311, P1319–Q1401, P1410–N1499, P1503–E1585, P1588–T1680, P1690–N1785, P1793–E1878, P1886–N1970, P1973–E2069, P2073–V2163, P2173–S2260, Q2263–T2343, P2349–L2435, and T2446–Q2530. Residues D1388 to V1400 show a composition bias toward polar residues. Disordered stretches follow at residues D1388–N1426 and E1478–R1497. N1422 carries an N-linked (GlcNAc...) asparagine glycan. 4 disulfides stabilise this stretch: C1435–C1481, C1527–C1573, C1618–C1663, and C1719–C1767. The span at C1481–R1497 shows a compositional bias: polar residues. Residues N1773–P1792 form a disordered region. Residues P1776 to P1788 are compositionally biased toward polar residues. 15 cysteine pairs are disulfide-bonded: C1814–C1861, C1907–C1954, C1998–C2053, C2099–C2147, C2195–C2242, C2284–C2329, C2374–C2420, C2467–C2514, C2713–C2725, C2719–C2736, C2738–C2747, C2754–C2764, C2759–C2773, C2775–C2784, and C2935–C2960. The segment at T1880–T1918 is disordered. Residues C1907–T1918 show a composition bias toward polar residues. N2476 carries an N-linked (GlcNAc...) asparagine glycan. Positions D2532 to C2713 constitute a Laminin G-like 1 domain. In terms of domain architecture, Laminin G-like 2 spans P2793–C2960. N2950 is a glycosylation site (N-linked (GlcNAc...) asparagine). Positions S2952–S2963 are enriched in low complexity. A disordered region spans residues S2952–E3124. Acidic residues-rich tracts occupy residues E2979–T2990 and P2999–T3010. Positions T3011–E3033 are enriched in low complexity. Basic and acidic residues predominate over residues E3034–D3044. A compositionally biased stretch (low complexity) spans I3049–T3079. The span at P3081–I3094 shows a compositional bias: acidic residues. 4 disulfides stabilise this stretch: C3141/C3152, C3146/C3162, C3164/C3173, and C3333/C3359. N3143 and N3156 each carry an N-linked (GlcNAc...) asparagine glycan. The Laminin G-like 3 domain maps to E3180–C3359.

Component of an integrin containing attachment complex, composed of at least pat-2, pat-3, pat-4, pat-6, unc-52, unc-97 and unc-112. In terms of tissue distribution, detected on embryonic and adult body wall muscle cells (at protein level). Found in the basement membrane of all contractile tissues (at protein level). Expressed in gonadal sheath cells and spermatheca.

It is found in the secreted. The protein resides in the extracellular space. The protein localises to the extracellular matrix. Its subcellular location is the basement membrane. It localises to the cytoplasm. It is found in the myofibril. The protein resides in the sarcomere. The protein localises to the m line. In terms of biological role, component of an integrin containing attachment complex, which is required for muscle development and maintenance. Probable structural role in myofilament assembly and/or attachment of the myofilament lattice to the cell membrane. May be an extracellular anchor for integrin receptors in body wall muscles and myoepithelial sheath cells. During the formation of neuromuscular junctions at the larval stage, negatively regulates membrane protrusion from body wall muscles, probably downstream of the integrin complex formed by pat-2 and pat-3. Involved in ovulation. Required for normal lifespan. The chain is Basement membrane proteoglycan from Caenorhabditis elegans.